The following is a 444-amino-acid chain: Ras-related protein RabX (444 aa).

Gly29–Asn36 is a binding site for GTP. The Effector region motif lies at Leu51 to Tyr58. Glu73–Ile77 contacts GTP. Residues Glu91–Ser136 are disordered. Over residues Asn95 to Asn135 the composition is skewed to low complexity. Position 207 to 210 (Asn207 to Asn210) interacts with GTP. 2 disordered regions span residues Thr213 to Ile232 and Leu298 to Leu401. Composition is skewed to low complexity over residues Ser217–Ile232 and Asn303–Asn399. Residue Cys439 is the site of S-palmitoyl cysteine attachment. Cys441 is subject to Cysteine methyl ester. Cys441 carries S-geranylgeranyl cysteine lipidation. A propeptide spans Asn442–Met444 (removed in mature form).

This sequence belongs to the small GTPase superfamily. Rab family.

The protein localises to the cell membrane. This Dictyostelium discoideum (Social amoeba) protein is Ras-related protein RabX (rabX).